The sequence spans 80 residues: Conotoxin Vi6.2 (80 aa).

The signal sequence occupies residues methionine 1–alanine 22. The propeptide occupies aspartate 23–arginine 47. Cystine bridges form between cysteine 49-cysteine 62, cysteine 56-cysteine 67, and cysteine 61-cysteine 77. Residues proline 60 and proline 63 each carry the 4-hydroxyproline modification.

It belongs to the conotoxin O1 superfamily. As to expression, expressed by the venom duct.

The protein resides in the secreted. Ion channel inhibitor that inhibits the increase in intracellular calcium upon depolarization in DRG neurons. In vivo, both intraperitoneal and intracranial injections into mice induce hyperactivity. The polypeptide is Conotoxin Vi6.2 (Conus virgo (Virgin cone)).